Reading from the N-terminus, the 352-residue chain is UDP-N-acetylglucosamine--N-acetylmuramyl-(pentapeptide) pyrophosphoryl-undecaprenol N-acetylglucosamine transferase (352 aa).

Residues 12–14 (TGG), asparagine 124, arginine 160, serine 188, and glutamine 287 each bind UDP-N-acetyl-alpha-D-glucosamine.

This sequence belongs to the glycosyltransferase 28 family. MurG subfamily.

The protein resides in the cell inner membrane. It carries out the reaction di-trans,octa-cis-undecaprenyl diphospho-N-acetyl-alpha-D-muramoyl-L-alanyl-D-glutamyl-meso-2,6-diaminopimeloyl-D-alanyl-D-alanine + UDP-N-acetyl-alpha-D-glucosamine = di-trans,octa-cis-undecaprenyl diphospho-[N-acetyl-alpha-D-glucosaminyl-(1-&gt;4)]-N-acetyl-alpha-D-muramoyl-L-alanyl-D-glutamyl-meso-2,6-diaminopimeloyl-D-alanyl-D-alanine + UDP + H(+). Its pathway is cell wall biogenesis; peptidoglycan biosynthesis. Functionally, cell wall formation. Catalyzes the transfer of a GlcNAc subunit on undecaprenyl-pyrophosphoryl-MurNAc-pentapeptide (lipid intermediate I) to form undecaprenyl-pyrophosphoryl-MurNAc-(pentapeptide)GlcNAc (lipid intermediate II). This is UDP-N-acetylglucosamine--N-acetylmuramyl-(pentapeptide) pyrophosphoryl-undecaprenol N-acetylglucosamine transferase from Dechloromonas aromatica (strain RCB).